Reading from the N-terminus, the 1485-residue chain is Chromosome partition protein MukB (1485 aa).

Gly34–Ser41 serves as a coordination point for ATP. Coiled-coil stretches lie at residues Leu337–Gln480, Gln509–Leu605, Arg780–Ser805, Glu835–His915, Gly977–Gly1116, and Glu1210–Ile1235. The flexible hinge stretch occupies residues Pro666–Arg783.

The protein belongs to the SMC family. MukB subfamily. In terms of assembly, homodimerization via its hinge domain. Binds to DNA via its C-terminal region. Interacts, and probably forms a ternary complex, with MukE and MukF via its C-terminal region. The complex formation is stimulated by calcium or magnesium. Interacts with tubulin-related protein FtsZ.

The protein localises to the cytoplasm. It is found in the nucleoid. Plays a central role in chromosome condensation, segregation and cell cycle progression. Functions as a homodimer, which is essential for chromosome partition. Involved in negative DNA supercoiling in vivo, and by this means organize and compact chromosomes. May achieve or facilitate chromosome segregation by condensation DNA from both sides of a centrally located replisome during cell division. This Yersinia pestis bv. Antiqua (strain Antiqua) protein is Chromosome partition protein MukB.